We begin with the raw amino-acid sequence, 456 residues long: Myricetin 3-O-rhamnosyltransferase UGT77B2 (456 aa).

The Proton acceptor role is filled by H19. H19 lines the an anthocyanidin pocket. The active-site Charge relay is the D116. H147 contributes to the an anthocyanidin binding site. 5 residues coordinate UDP-beta-L-rhamnose: T279, A334, H351, N355, and E359. A374 is a binding site for an anthocyanidin.

This sequence belongs to the UDP-glycosyltransferase family. In terms of tissue distribution, expressed in young cromes.

It carries out the reaction myricetin + UDP-beta-L-rhamnose = myricetin 3-O-alpha-L-rhamnoside + UDP + H(+). The protein operates within flavonoid metabolism. Its function is as follows. Rhamnosyltransferase involved in montbretin A (MbA) biosynthesis. Catalyzes the 3-O rhamnosylation of myricetin to produce myricetin 3-O-alpha-L-rhamnoside (MR), a precursor of MbA. MbA is a potent inhibitor of human pancreatic alpha-amylase and is being developed as drug candidate to treat type-2 diabetes. In vitro, is able to transfer UDP-glucose and UDP-xylose with 50-fold less efficiency compared with UDP-rhamnose. In vitro, can use kaempferol or quercetin as substrates, although these two flavonols may not be physiological substrates in vivo. In Crocosmia x crocosmiiflora (Montbretia), this protein is Myricetin 3-O-rhamnosyltransferase UGT77B2.